The chain runs to 462 residues: Glutamate--tRNA ligase 1 (462 aa).

A 'HIGH' region motif is present at residues 8-18 (PSPTGYLHIGG). Positions 237 to 241 (KLSKR) match the 'KMSKS' region motif. K240 contributes to the ATP binding site.

This sequence belongs to the class-I aminoacyl-tRNA synthetase family. Glutamate--tRNA ligase type 1 subfamily. Monomer.

The protein localises to the cytoplasm. The catalysed reaction is tRNA(Glu) + L-glutamate + ATP = L-glutamyl-tRNA(Glu) + AMP + diphosphate. In terms of biological role, catalyzes the attachment of glutamate to tRNA(Glu) in a two-step reaction: glutamate is first activated by ATP to form Glu-AMP and then transferred to the acceptor end of tRNA(Glu). This chain is Glutamate--tRNA ligase 1, found in Sulfurimonas denitrificans (strain ATCC 33889 / DSM 1251) (Thiomicrospira denitrificans (strain ATCC 33889 / DSM 1251)).